We begin with the raw amino-acid sequence, 486 residues long: Alpha-L-arabinofuranosidase B (486 aa).

The first 25 residues, 1–25 (MLSLKAVLRFASVAVAVVLPTLAQA), serve as a signal peptide directing secretion. Residue asparagine 42 is glycosylated (N-linked (GlcNAc...) asparagine). Positions 45 to 342 (LVKQRADPQI…KLYWRSDGTP (298 aa)) are catalytic. Residue aspartate 51 is the Proton acceptor of the active site. Glutamate 229 acts as the Proton donor in catalysis. Asparagine 302, asparagine 416, and asparagine 426 each carry an N-linked (GlcNAc...) asparagine glycan. The interval 359 to 467 (SSADQTLYVG…AGSYLVSGGN (109 aa)) is ABD.

Belongs to the glycosyl hydrolase 43 family.

It localises to the secreted. The catalysed reaction is Hydrolysis of terminal non-reducing alpha-L-arabinofuranoside residues in alpha-L-arabinosides.. It participates in glycan metabolism; L-arabinan degradation. Secreted arabinofuranosidase that causes degradation of rice cell wall components during infection. Required for virulence. This Pyricularia oryzae (strain 70-15 / ATCC MYA-4617 / FGSC 8958) (Rice blast fungus) protein is Alpha-L-arabinofuranosidase B.